The sequence spans 764 residues: 5-methyltetrahydropteroyltriglutamate--homocysteine methyltransferase (764 aa).

5-methyltetrahydropteroyltri-L-glutamate is bound by residues 16-19 (RELK) and K117. L-homocysteine contacts are provided by residues 442–444 (IGS) and E495. Residues 442 to 444 (IGS) and E495 each bind L-methionine. Residues 526–527 (RC) and W572 contribute to the 5-methyltetrahydropteroyltri-L-glutamate site. D610 is an L-homocysteine binding site. L-methionine is bound at residue D610. E616 is a binding site for 5-methyltetrahydropteroyltri-L-glutamate. Zn(2+) is bound by residues H652, C654, and E676. H705 serves as the catalytic Proton donor. C737 lines the Zn(2+) pocket.

It belongs to the vitamin-B12 independent methionine synthase family. Zn(2+) serves as cofactor.

The catalysed reaction is 5-methyltetrahydropteroyltri-L-glutamate + L-homocysteine = tetrahydropteroyltri-L-glutamate + L-methionine. It functions in the pathway amino-acid biosynthesis; L-methionine biosynthesis via de novo pathway; L-methionine from L-homocysteine (MetE route): step 1/1. Its function is as follows. Catalyzes the transfer of a methyl group from 5-methyltetrahydrofolate to homocysteine resulting in methionine formation. The sequence is that of 5-methyltetrahydropteroyltriglutamate--homocysteine methyltransferase from Bordetella petrii (strain ATCC BAA-461 / DSM 12804 / CCUG 43448).